Here is a 472-residue protein sequence, read N- to C-terminus: UDP-N-acetylmuramate--L-alanine ligase (472 aa).

123 to 129 is an ATP binding site; it reads GSHGKTT.

This sequence belongs to the MurCDEF family.

It localises to the cytoplasm. The catalysed reaction is UDP-N-acetyl-alpha-D-muramate + L-alanine + ATP = UDP-N-acetyl-alpha-D-muramoyl-L-alanine + ADP + phosphate + H(+). Its pathway is cell wall biogenesis; peptidoglycan biosynthesis. Cell wall formation. This chain is UDP-N-acetylmuramate--L-alanine ligase, found in Solibacter usitatus (strain Ellin6076).